The following is a 456-amino-acid chain: Flagellum-specific ATP synthase (456 aa).

182 to 189 (AGSGVGKS) provides a ligand contact to ATP.

The protein belongs to the ATPase alpha/beta chains family.

It is found in the cytoplasm. It catalyses the reaction ATP + H2O + 4 H(+)(in) = ADP + phosphate + 5 H(+)(out). In terms of biological role, probable catalytic subunit of a protein translocase for flagellum-specific export, or a proton translocase involved in local circuits at the flagellum. May be involved in a specialized protein export pathway that proceeds without signal peptide cleavage. This Salmonella typhimurium (strain LT2 / SGSC1412 / ATCC 700720) protein is Flagellum-specific ATP synthase (fliI).